The sequence spans 64 residues: Large ribosomal subunit protein bL35 (64 aa).

The segment covering 1–10 has biased composition (polar residues); sequence MPKMKTNSAA. A disordered region spans residues 1–64; the sequence is MPKMKTNSAA…AKKLHQLLQK (64 aa). The span at 54-64 shows a compositional bias: basic residues; that stretch reads QAKKLHQLLQK.

The protein belongs to the bacterial ribosomal protein bL35 family.

The protein is Large ribosomal subunit protein bL35 of Bifidobacterium longum (strain NCC 2705).